The primary structure comprises 260 residues: Phosphate import ATP-binding protein PstB 1 (260 aa).

The region spanning 13-255 (VRVRDLNLWY…PHTKKAEDYI (243 aa)) is the ABC transporter domain. Residue 45-52 (GPSGCGKS) participates in ATP binding.

It belongs to the ABC transporter superfamily. Phosphate importer (TC 3.A.1.7) family. The complex is composed of two ATP-binding proteins (PstB), two transmembrane proteins (PstC and PstA) and a solute-binding protein (PstS).

The protein resides in the cell inner membrane. It catalyses the reaction phosphate(out) + ATP + H2O = ADP + 2 phosphate(in) + H(+). In terms of biological role, part of the ABC transporter complex PstSACB involved in phosphate import. Responsible for energy coupling to the transport system. This is Phosphate import ATP-binding protein PstB 1 from Chromohalobacter salexigens (strain ATCC BAA-138 / DSM 3043 / CIP 106854 / NCIMB 13768 / 1H11).